The chain runs to 217 residues: Segregation and condensation protein B (217 aa).

It belongs to the ScpB family. As to quaternary structure, homodimer. Homodimerization may be required to stabilize the binding of ScpA to the Smc head domains. Component of a cohesin-like complex composed of ScpA, ScpB and the Smc homodimer, in which ScpA and ScpB bind to the head domain of Smc. The presence of the three proteins is required for the association of the complex with DNA.

It localises to the cytoplasm. Functionally, participates in chromosomal partition during cell division. May act via the formation of a condensin-like complex containing Smc and ScpA that pull DNA away from mid-cell into both cell halves. The sequence is that of Segregation and condensation protein B from Geobacillus kaustophilus (strain HTA426).